Reading from the N-terminus, the 733-residue chain is Wall-associated receptor kinase 5 (733 aa).

Residues 1-23 form the signal peptide; it reads MKVHSLFLMAIFFYLAYTQLVKA. Topologically, residues 24–330 are extracellular; that stretch reads QPRDDCQTRC…IDTPKEEPKY (307 aa). N-linked (GlcNAc...) asparagine glycans are attached at residues asparagine 57, asparagine 77, asparagine 110, asparagine 137, asparagine 184, asparagine 206, asparagine 218, asparagine 232, and asparagine 247. Residues 231–278 enclose the EGF-like 1 domain; the sequence is GNQTCEQVVGRNICGGNSTCFDSTRGKGYNCKCLQGFDGNPYLSDGCQ. 6 disulfides stabilise this stretch: cysteine 235/cysteine 250, cysteine 244/cysteine 261, cysteine 263/cysteine 277, cysteine 283/cysteine 296, cysteine 290/cysteine 305, and cysteine 307/cysteine 320. Residues 279–321 form the EGF-like 2; calcium-binding domain; it reads DINECTTRIHNCSDTSTCENTLGSFHCQCPSGSDLNTTTMSCI. The N-linked (GlcNAc...) asparagine glycan is linked to asparagine 289. N-linked (GlcNAc...) asparagine glycosylation is present at asparagine 314. Residues 331 to 351 form a helical membrane-spanning segment; it reads LGWTTVLLGTTIGFLIILLTI. At 352-733 the chain is on the cytoplasmic side; it reads SYIQQKMRHR…VTRLDIETGR (382 aa). Threonine 397 carries the phosphothreonine modification. The Protein kinase domain maps to 408-691; it reads YNESRILGQG…RVKTTKHQWS (284 aa). ATP contacts are provided by residues 414 to 422 and lysine 436; that span reads LGQGGQGTV. Phosphotyrosine is present on tyrosine 481. Catalysis depends on aspartate 533, which acts as the Proton acceptor. 2 positions are modified to phosphothreonine: threonine 567 and threonine 572. At tyrosine 580 the chain carries Phosphotyrosine.

It belongs to the protein kinase superfamily. Ser/Thr protein kinase family. In terms of tissue distribution, predominantly expressed in green tissues such as stems and leaves.

Its subcellular location is the membrane. It catalyses the reaction L-seryl-[protein] + ATP = O-phospho-L-seryl-[protein] + ADP + H(+). The enzyme catalyses L-threonyl-[protein] + ATP = O-phospho-L-threonyl-[protein] + ADP + H(+). In terms of biological role, serine/threonine-protein kinase that may function as a signaling receptor of extracellular matrix component. Binding to pectin may have significance in the control of cell expansion, morphogenesis and development. In Arabidopsis thaliana (Mouse-ear cress), this protein is Wall-associated receptor kinase 5 (WAK5).